The following is a 78-amino-acid chain: uncharacterized protein (78 aa).

Positions 1–27 are cleaved as a signal peptide; it reads MQNSKTDMCAALWAVTGLVLNVAVRFA.

This is an uncharacterized protein from Dryophytes versicolor (chameleon treefrog).